Here is a 226-residue protein sequence, read N- to C-terminus: Lipoprotein-releasing system ATP-binding protein LolD (226 aa).

The ABC transporter domain maps to 6–226; the sequence is LSVEQVSKSF…QLQQGSLIRI (221 aa). Position 42–49 (42–49) interacts with ATP; that stretch reads GESGCGKS.

Belongs to the ABC transporter superfamily. Lipoprotein translocase (TC 3.A.1.125) family. As to quaternary structure, the complex is composed of two ATP-binding proteins (LolD) and two transmembrane proteins (LolC and LolE).

It localises to the cell inner membrane. Part of the ABC transporter complex LolCDE involved in the translocation of mature outer membrane-directed lipoproteins, from the inner membrane to the periplasmic chaperone, LolA. Responsible for the formation of the LolA-lipoprotein complex in an ATP-dependent manner. This is Lipoprotein-releasing system ATP-binding protein LolD from Treponema pallidum (strain Nichols).